A 234-amino-acid chain; its full sequence is Glycerol uptake facilitator protein (234 aa).

6 helical membrane passes run 9-29 (FLGT…VVLP), 37-57 (GWIV…FVSG), 61-81 (PAYL…LPWA), 83-103 (VLPY…LVWL), 135-155 (LISE…LGLY), and 159-179 (AGIG…SLGG). An NPA 1 motif is present at residues 65 to 67 (NPA). The NPA 2 signature appears at 186–188 (NPA). The chain crosses the membrane as a helical span at residues 214–234 (WIPVVGPVIGAALAVLVFSLF).

This sequence belongs to the MIP/aquaporin (TC 1.A.8) family.

The protein localises to the cell membrane. The catalysed reaction is glycerol(in) = glycerol(out). Its function is as follows. Mediates glycerol diffusion across the cytoplasmic membrane via a pore-type mechanism. The polypeptide is Glycerol uptake facilitator protein (glpF) (Streptococcus pneumoniae serotype 4 (strain ATCC BAA-334 / TIGR4)).